A 217-amino-acid chain; its full sequence is Ras-related protein Rab11B (217 aa).

21-28 (GDSGVGKS) lines the GTP pocket. The short motif at 43 to 51 (SKSTIGVEF) is the Effector region element. GTP is bound by residues 69–73 (DTAGQ) and 127–130 (NKAD). Residues Cys-214 and Cys-215 are each lipidated (S-geranylgeranyl cysteine).

It belongs to the small GTPase superfamily. Rab family.

It is found in the cell membrane. The sequence is that of Ras-related protein Rab11B (RAB11B) from Nicotiana tabacum (Common tobacco).